We begin with the raw amino-acid sequence, 137 residues long: Translation initiation factor 2 subunit beta (137 aa).

Belongs to the eIF-2-beta/eIF-5 family. Heterotrimer composed of an alpha, a beta and a gamma chain.

Functionally, eIF-2 functions in the early steps of protein synthesis by forming a ternary complex with GTP and initiator tRNA. This is Translation initiation factor 2 subunit beta (eif2b) from Archaeoglobus fulgidus (strain ATCC 49558 / DSM 4304 / JCM 9628 / NBRC 100126 / VC-16).